The sequence spans 473 residues: MSSSLWLQCLQQLQEELPATEFSMWVRPLQAELNGNTLTLFAPNRFVLDWVRDKYLNSINRLLQEYCGNDIPHLHFEIGNKRVTAPKSETIAPARTRTAADVAAESSAPAQLQARKPVHNIWRDEEPVAVDLNHRSNVNPKHKFNNFVEGKSNQLGLAAARQVSDNPGTAYNPLFLYGGTGLGKTHLLHAVGNAIVDNKPNAKVVYMHSERFVQDMVKALQNNAIEEFKRYYRSVDALLIDDIQFFANKERSQEEFFHTFNALLEGNQQIILTSDRYPKEINGVEDRLKSRFGWGLTVAIEPPELETRVAILMKKAEDHQIHLADEVAFFIAKRLRSNVRELEGALNRVIANANFTGRPITIDFVREALRDLLALQEKLVTIDNIQKTVAEYYKIKVADLLSKRRSRSVARPRQLAMALAKELTNHSLPEIGDAFGGRDHTTVLHACRKIAQLREESHDIKEDYSNLIRTLSS.

The segment at 1–90 is domain I, interacts with DnaA modulators; it reads MSSSLWLQCL…KRVTAPKSET (90 aa). Positions 91–136 are domain II; sequence IAPARTRTAADVAAESSAPAQLQARKPVHNIWRDEEPVAVDLNHRS. The domain III, AAA+ region stretch occupies residues 137–353; that stretch reads NVNPKHKFNN…GALNRVIANA (217 aa). ATP is bound by residues Gly-181, Gly-183, Lys-184, and Thr-185. Residues 354 to 473 form a domain IV, binds dsDNA region; it reads NFTGRPITID…YSNLIRTLSS (120 aa).

Belongs to the DnaA family. In terms of assembly, oligomerizes as a right-handed, spiral filament on DNA at oriC.

The protein localises to the cytoplasm. Functionally, plays an essential role in the initiation and regulation of chromosomal replication. ATP-DnaA binds to the origin of replication (oriC) to initiate formation of the DNA replication initiation complex once per cell cycle. Binds the DnaA box (a 9 base pair repeat at the origin) and separates the double-stranded (ds)DNA. Forms a right-handed helical filament on oriC DNA; dsDNA binds to the exterior of the filament while single-stranded (ss)DNA is stabiized in the filament's interior. The ATP-DnaA-oriC complex binds and stabilizes one strand of the AT-rich DNA unwinding element (DUE), permitting loading of DNA polymerase. After initiation quickly degrades to an ADP-DnaA complex that is not apt for DNA replication. Binds acidic phospholipids. This is Chromosomal replication initiator protein DnaA from Vibrio atlanticus (strain LGP32) (Vibrio splendidus (strain Mel32)).